Here is a 485-residue protein sequence, read N- to C-terminus: 1-aminocyclopropane-1-carboxylate synthase 2 (485 aa).

2 residues coordinate substrate: glutamate 55 and tyrosine 92. Position 278 is an N6-(pyridoxal phosphate)lysine (lysine 278). A Phosphoserine modification is found at serine 460.

The protein belongs to the class-I pyridoxal-phosphate-dependent aminotransferase family. In terms of assembly, homodimer and heterodimer. In vivo, the relevance of heterodimerization with other ACS enzymes is however unsure. Pyridoxal 5'-phosphate is required as a cofactor. Post-translationally, phosphorylated on Ser 460; phosphorylation may regulate its turnover. May be processed at its C-terminus.

It catalyses the reaction S-adenosyl-L-methionine = 1-aminocyclopropane-1-carboxylate + S-methyl-5'-thioadenosine + H(+). It functions in the pathway alkene biosynthesis; ethylene biosynthesis via S-adenosyl-L-methionine; ethylene from S-adenosyl-L-methionine: step 1/2. In terms of biological role, 1-aminocyclopropane-1-carboxylate synthase (ACS) enzymes catalyze the conversion of S-adenosyl-L-methionine (SAM) into 1-aminocyclopropane-1-carboxylate (ACC), a direct precursor of ethylene. This is 1-aminocyclopropane-1-carboxylate synthase 2 (ACS2) from Solanum lycopersicum (Tomato).